Consider the following 163-residue polypeptide: Putative 4-hydroxy-4-methyl-2-oxoglutarate aldolase (163 aa).

Substrate-binding positions include 76–79 (GDML) and arginine 98. Aspartate 99 is an a divalent metal cation binding site.

Belongs to the class II aldolase/RraA-like family. As to quaternary structure, homotrimer. A divalent metal cation is required as a cofactor.

It catalyses the reaction 4-hydroxy-4-methyl-2-oxoglutarate = 2 pyruvate. The catalysed reaction is oxaloacetate + H(+) = pyruvate + CO2. Functionally, catalyzes the aldol cleavage of 4-hydroxy-4-methyl-2-oxoglutarate (HMG) into 2 molecules of pyruvate. Also contains a secondary oxaloacetate (OAA) decarboxylase activity due to the common pyruvate enolate transition state formed following C-C bond cleavage in the retro-aldol and decarboxylation reactions. The polypeptide is Putative 4-hydroxy-4-methyl-2-oxoglutarate aldolase (Pseudomonas putida (strain W619)).